A 256-amino-acid polypeptide reads, in one-letter code: Glucanase inhibitor protein 2 (256 aa).

The N-terminal stretch at 1-15 is a signal peptide; that stretch reads MKLISTIAAATTAFG. Positions 27–254 constitute a Peptidase S1 domain; it reads IFGGGIIPSG…ATEWINSVTK (228 aa). The cysteines at positions 54 and 70 are disulfide-linked. N-linked (GlcNAc...) asparagine glycosylation is found at N87, N102, N107, and N157. 2 disulfides stabilise this stretch: C177–C189 and C199–C230.

This sequence belongs to the peptidase S1 family. In terms of assembly, forms an apoplastic complex with host endoglucanases in tomato leaves during P.infestans infection.

The protein resides in the secreted. Functionally, secreted effector that suppresses host plant glucan elicitor-mediated defense responses. Targets host endoglucanases and inhibits the endoglucanase-mediated release of elicitor-active glucan oligosaccharides from P.infestans cell walls. This is Glucanase inhibitor protein 2 from Phytophthora infestans (Potato late blight agent).